A 580-amino-acid polypeptide reads, in one-letter code: MKEQLEQLLAEAIGQLKAQGTIPADHSVNIQLDRPRDKSHGDFATNLALMLAKPAKSNPRQLAEAIVAAVPENSLLSKMDIAGPGFINFTISQDQLKDQLTAMLNSDSLNVDVAEESKTIVIDYSSPNLAKEMHVGHLRSAIIGDAVSRVCEFLGHKVIRQNHVGDWGTQFGMLLAYMEALDNQSAEYELSNLETFYKAAKQRFDESEEFADRARQLVVKLQSGDEYCLKLWNQFIDVSLSHCQDVYDRLGVKLTRDDVMAESAYNDKLPGVIEHLREKGLLTEDQGAQCVFLEEYKGKEGEPLPIIVQKKGGGYLYATTDLAAIEYRQKELGGDHLMYFVDARQALHFDQIFTLARKAGFVEGDIQLNHYGFGTVMGKDGKPYKSRDGGVTKLADLLDEAERRALELLQQKTTDLSEEQQKRVAEVVGISSVKYADLSKNRTSDYVFDWNHMLTFEGNTAPYLLYAFTRVNSIFDRLGDTAFDRNADIILSDERELALANQLVRFNEVLHQVQDKAMPHFLCGFLFDLAGRFSSFYEACPILNQEDEALRNSRLKLSMLTANVLKQGLELLGIPTLEKM.

Positions 127–137 (PNLAKEMHVGH) match the 'HIGH' region motif.

Belongs to the class-I aminoacyl-tRNA synthetase family. As to quaternary structure, monomer.

The protein resides in the cytoplasm. It carries out the reaction tRNA(Arg) + L-arginine + ATP = L-arginyl-tRNA(Arg) + AMP + diphosphate. The chain is Arginine--tRNA ligase from Idiomarina loihiensis (strain ATCC BAA-735 / DSM 15497 / L2-TR).